Reading from the N-terminus, the 795-residue chain is Phenylalanine--tRNA ligase beta subunit (795 aa).

The 111-residue stretch at Ser39 to Arg149 folds into the tRNA-binding domain. One can recognise a B5 domain in the interval Pro402–Asn477. Mg(2+) is bound by residues Asp455, Asp461, Glu464, and Glu465. The FDX-ACB domain occupies Ser701 to Arg794.

The protein belongs to the phenylalanyl-tRNA synthetase beta subunit family. Type 1 subfamily. In terms of assembly, tetramer of two alpha and two beta subunits. It depends on Mg(2+) as a cofactor.

The protein localises to the cytoplasm. It catalyses the reaction tRNA(Phe) + L-phenylalanine + ATP = L-phenylalanyl-tRNA(Phe) + AMP + diphosphate + H(+). The chain is Phenylalanine--tRNA ligase beta subunit from Haemophilus ducreyi (strain 35000HP / ATCC 700724).